A 100-amino-acid chain; its full sequence is Urease subunit gamma (100 aa).

It belongs to the urease gamma subunit family. Heterotrimer of UreA (gamma), UreB (beta) and UreC (alpha) subunits. Three heterotrimers associate to form the active enzyme.

It is found in the cytoplasm. The catalysed reaction is urea + 2 H2O + H(+) = hydrogencarbonate + 2 NH4(+). It functions in the pathway nitrogen metabolism; urea degradation; CO(2) and NH(3) from urea (urease route): step 1/1. The polypeptide is Urease subunit gamma (Staphylococcus saprophyticus subsp. saprophyticus (strain ATCC 15305 / DSM 20229 / NCIMB 8711 / NCTC 7292 / S-41)).